A 320-amino-acid chain; its full sequence is Cytochrome f (320 aa).

A signal peptide spans Met-1 to Asn-35. Heme is bound by residues Phe-37, Cys-57, Cys-60, and His-61. Residues Ile-286 to Lys-306 traverse the membrane as a helical segment.

Belongs to the cytochrome f family. As to quaternary structure, the 4 large subunits of the cytochrome b6-f complex are cytochrome b6, subunit IV (17 kDa polypeptide, petD), cytochrome f and the Rieske protein, while the 4 small subunits are PetG, PetL, PetM and PetN. The complex functions as a dimer. It depends on heme as a cofactor.

It localises to the plastid. It is found in the chloroplast thylakoid membrane. Component of the cytochrome b6-f complex, which mediates electron transfer between photosystem II (PSII) and photosystem I (PSI), cyclic electron flow around PSI, and state transitions. This Pyropia yezoensis (Susabi-nori) protein is Cytochrome f.